Reading from the N-terminus, the 449-residue chain is UMP-CMP kinase 2, mitochondrial (449 aa).

A mitochondrion-targeting transit peptide spans 1–98 (MAFARRLLRG…VRAARLHQRL (98 aa)). ATP is bound at residue 259-266 (GLDATGKT). A coiled-coil region spans residues 380-412 (EERLQRLQGRGMEKTREEAELEANSVFRQKVEM).

This sequence belongs to the thymidylate kinase family. In terms of tissue distribution, high levels are observed in myeloid, lymphoid and mesenchymal tissues.

It localises to the mitochondrion. The catalysed reaction is CMP + ATP = CDP + ADP. The enzyme catalyses dCMP + ATP = dCDP + ADP. It catalyses the reaction a 2'-deoxyribonucleoside 5'-diphosphate + ATP = a 2'-deoxyribonucleoside 5'-triphosphate + ADP. It carries out the reaction a ribonucleoside 5'-diphosphate + ATP = a ribonucleoside 5'-triphosphate + ADP. Its function is as follows. Mitochondrial nucleotide monophosphate kinase needed for salvage dNTP synthesis that mediates immunomodulatory and antiviral activities through IFN-dependent and IFN-independent pathways. Restricts the replication of multiple viruses including flaviviruses or coronaviruses. Together with viperin/RSAD2 and ddhCTP, suppresses the replication of several coronaviruses through inhibition of the viral RNA-dependent RNA polymerase activities. Concerning flaviviruses, restricts RNA translation when localized to the mitochondria independently of its kinase activity. Is able to phosphorylate dUMP, dCMP, CMP, UMP and monophosphates of the pyrimidine nucleoside analogs ddC, dFdC, araC, BVDU and FdUrd with ATP as phosphate donor. Efficacy is highest for dUMP followed by dCMP while CMP and UMP are poor substrates. Controls therefore mitochondrial DNA synthesis by supplying required deoxyribonucleotides. CMPK2-dependent mitochondrial DNA synthesis is necessary for the production of oxidized mitochondrial DNA fragments after exposure to NLRP3 activators. In turn, cytosolic oxidized mtDNA associates with the NLRP3 inflammasome complex and is required for its activation. The chain is UMP-CMP kinase 2, mitochondrial (CMPK2) from Homo sapiens (Human).